The primary structure comprises 409 residues: N-carbamoyl-L-amino acid amidohydrolase (409 aa).

4 residues coordinate a divalent metal cation: His79, Asp90, Glu125, and His189. An N-carbamoyl-L-alpha-amino acid is bound by residues Gln192, His225, Asn273, Arg286, and Ala355. Residues 208–325 (GIAGLIWVKF…TTERLQEMAP (118 aa)) form an involved in dimerization region. His380 is an a divalent metal cation binding site.

It belongs to the peptidase M20 family. In terms of assembly, homodimer. It depends on Mn(2+) as a cofactor. Ni(2+) is required as a cofactor. The cofactor is Co(2+). Fe(2+) serves as cofactor.

It carries out the reaction an N-carbamoyl-L-alpha-amino acid + H2O + 2 H(+) = an L-alpha-amino acid + NH4(+) + CO2. The catalysed reaction is N-carbamoyl-L-methionine + H2O + 2 H(+) = L-methionine + NH4(+) + CO2. It catalyses the reaction N-acetyl-L-methionine + H2O = L-methionine + acetate. The enzyme catalyses N-carbamoyl-L-alanine + H2O + 2 H(+) = L-alanine + NH4(+) + CO2. It carries out the reaction N-carbamoyl-L-glutamate + H2O + 2 H(+) = L-glutamate + NH4(+) + CO2. The catalysed reaction is N-carbamoylglycine + H2O + 2 H(+) = glycine + NH4(+) + CO2. It catalyses the reaction N-carbamoyl-L-leucine + H2O + 2 H(+) = L-leucine + NH4(+) + CO2. Catalyzes the hydrolysis of aliphatic N-carbamoyl-L-alpha-amino acids to free L-alpha-amino acids. Is strictly L-specific since it is inactive toward N-carbamoyl-D-alpha-amino acids. Is not able to use aromatic N-carbamoyl-L-alpha-amino acids like N-carbamoyl-L-tryptophan and N-carbamoyl-L-phenylalanine as substrates, but is also able to hydrolyze N-acetyl-L-methionine. In Geobacillus stearothermophilus (Bacillus stearothermophilus), this protein is N-carbamoyl-L-amino acid amidohydrolase.